We begin with the raw amino-acid sequence, 436 residues long: MAVWALGINHHTAPLDLRGRFAFALDQIAPTLHGLRDSLSSASGRHPGVETAIISTCNRTEIYCAAEAPALDHTLDWLAHSGGVSPALLRSHSYSLENGLVARHAFRVASGLDSMVLGEAQILGQMKDAVRAAEGAGALGTTLNQLFQRSFAVAKEVRTSTDIGAHSISMAAAAVRLAGQLFEDLSQIRVLFVGAGEMIELCTTHFAAKNPKQISIANRTLERGEKLAARFGGDVMRLADLPDHLHEYDAVISCTASSLPIIGLGAVERSLKKRRHRPMFMVDLAVPRDIEPEVQQLQDAYLYTVDDLASVVQTAQAHRQAAVAQAEAIIDAGVQSFVHWMELRSPATQNGGVVPLIQQLNSQADEWRALEIARAKKRLAKGEDIETVLEALSRGLTQKMLHGTMAELRAGDAEARAQTAQAVSRLFLRSHSKNGL.

Substrate-binding positions include 56–59, Ser114, 119–121, and Gln125; these read TCNR and EAQ. The Nucleophile role is filled by Cys57. 194 to 199 contributes to the NADP(+) binding site; the sequence is GAGEMI.

The protein belongs to the glutamyl-tRNA reductase family. Homodimer.

It carries out the reaction (S)-4-amino-5-oxopentanoate + tRNA(Glu) + NADP(+) = L-glutamyl-tRNA(Glu) + NADPH + H(+). Its pathway is porphyrin-containing compound metabolism; protoporphyrin-IX biosynthesis; 5-aminolevulinate from L-glutamyl-tRNA(Glu): step 1/2. Catalyzes the NADPH-dependent reduction of glutamyl-tRNA(Glu) to glutamate 1-semialdehyde (GSA). The chain is Glutamyl-tRNA reductase from Acidovorax sp. (strain JS42).